Reading from the N-terminus, the 248-residue chain is ATP synthase subunit a (248 aa).

A run of 6 helical transmembrane segments spans residues 34–54 (TNATLWMALAALAITALLVFG), 91–111 (YFPYVMTLFCFILFANFLGLL), 121–141 (IAVTAVLAVLVFAGVTVLGFV), 147–167 (FLGLFWVSSAPLALRPVLAVI), 196–216 (VFAAFAAVAAIAPVSVVAITA), and 220–240 (LEVLVCLIQAYVFTILTCVYL).

The protein belongs to the ATPase A chain family. F-type ATPases have 2 components, CF(1) - the catalytic core - and CF(0) - the membrane proton channel. CF(1) has five subunits: alpha(3), beta(3), gamma(1), delta(1), epsilon(1). CF(0) has three main subunits: a(1), b(2) and c(9-12). The alpha and beta chains form an alternating ring which encloses part of the gamma chain. CF(1) is attached to CF(0) by a central stalk formed by the gamma and epsilon chains, while a peripheral stalk is formed by the delta and b chains.

The protein localises to the cell inner membrane. Functionally, key component of the proton channel; it plays a direct role in the translocation of protons across the membrane. The sequence is that of ATP synthase subunit a from Paracoccus denitrificans (strain Pd 1222).